The sequence spans 1139 residues: Protein lin-25 (1139 aa).

The short motif at 695-701 (IKKKKDP) is the Nuclear localization signal element.

As to expression, expressed in seam cells and all six vulva precursor cells (VPC). After VPC division, expression is restricted to descendants of the VPC cell lineages P5.p, P6.p and P7.p (at protein level).

The protein resides in the nucleus. The protein localises to the cytoplasm. Participates in the inductive signaling pathway downstream of let-60 Ras and the RAF/MAP kinase cascade to regulate specification and differentiation of many cell types. Positively regulates the fate of vulval precursor cells. Required for induction of the P12 and excretory duct cell fates. In males, it is also required for proper formation of spicules. Does not function in the signaling pathway that promotes exit from pachytene. Plays a role in responses to M.nematophilum-mediated bacterial infection by promoting tail swelling and preventing constipation. The protein is Protein lin-25 (lin-25) of Caenorhabditis elegans.